The chain runs to 285 residues: MRILIITGLSGSGKSTAVRALEDEGFFCQDNLPVALFPTFVDLVDNAKERIRDVALVMDIRGRDFNKGFEKVFQEITEAGHLVDILFFDATDEVIIRRFSETRRRHPAIDSGSVPEGIRSERQQLAGLRSFATQIIDTSELNVHQLKDLVISLVKGGEGGREMTVHLQSFGYRFGLPLESDLVMDVRFLPNPYFIPELKEFSGLDPKVRAYVLKHDETGEFLTKFKELLEFLLPGYKREGKSYLTISIGCTGGRHRSVVIAEEIRDFFKRKQLNLKVSHRDMEKG.

8–15 is a binding site for ATP; that stretch reads GLSGSGKS. Position 59 to 62 (59 to 62) interacts with GTP; it reads DIRG.

The protein belongs to the RapZ-like family.

Its function is as follows. Displays ATPase and GTPase activities. In Geotalea daltonii (strain DSM 22248 / JCM 15807 / FRC-32) (Geobacter daltonii), this protein is Nucleotide-binding protein Geob_2284.